Here is an 82-residue protein sequence, read N- to C-terminus: Translational regulator CsrA (82 aa).

This sequence belongs to the CsrA/RsmA family. As to quaternary structure, homodimer; the beta-strands of each monomer intercalate to form a hydrophobic core, while the alpha-helices form wings that extend away from the core.

It localises to the cytoplasm. Its function is as follows. A translational regulator that binds mRNA to regulate translation initiation and/or mRNA stability. Usually binds in the 5'-UTR at or near the Shine-Dalgarno sequence preventing ribosome-binding, thus repressing translation. Its main target seems to be the major flagellin gene, while its function is anatagonized by FliW. In Geobacillus kaustophilus (strain HTA426), this protein is Translational regulator CsrA.